Consider the following 315-residue polypeptide: ATP synthase gamma chain (315 aa).

This sequence belongs to the ATPase gamma chain family. As to quaternary structure, F-type ATPases have 2 components, CF(1) - the catalytic core - and CF(0) - the membrane proton channel. CF(1) has five subunits: alpha(3), beta(3), gamma(1), delta(1), epsilon(1). CF(0) has three main subunits: a, b and c.

The protein localises to the cellular thylakoid membrane. Its function is as follows. Produces ATP from ADP in the presence of a proton gradient across the membrane. The gamma chain is believed to be important in regulating ATPase activity and the flow of protons through the CF(0) complex. This is ATP synthase gamma chain from Trichormus variabilis (strain ATCC 29413 / PCC 7937) (Anabaena variabilis).